A 315-amino-acid polypeptide reads, in one-letter code: Type II restriction enzyme AvaI (315 aa).

It carries out the reaction Endonucleolytic cleavage of DNA to give specific double-stranded fragments with terminal 5'-phosphates.. In terms of biological role, a P subtype restriction enzyme that recognizes the double-stranded sequence 5'-CYCGRG-3' and cleaves after C-1. The sequence is that of Type II restriction enzyme AvaI from Anabaena variabilis.